We begin with the raw amino-acid sequence, 171 residues long: Translation initiation factor IF-3 (171 aa).

This sequence belongs to the IF-3 family. As to quaternary structure, monomer.

Its subcellular location is the cytoplasm. IF-3 binds to the 30S ribosomal subunit and shifts the equilibrium between 70S ribosomes and their 50S and 30S subunits in favor of the free subunits, thus enhancing the availability of 30S subunits on which protein synthesis initiation begins. The chain is Translation initiation factor IF-3 from Halalkalibacterium halodurans (strain ATCC BAA-125 / DSM 18197 / FERM 7344 / JCM 9153 / C-125) (Bacillus halodurans).